Consider the following 408-residue polypeptide: Arginine biosynthesis bifunctional protein ArgJ (408 aa).

Thr-158, Lys-184, Thr-195, Glu-281, Asn-403, and Thr-408 together coordinate substrate. Catalysis depends on Thr-195, which acts as the Nucleophile.

The protein belongs to the ArgJ family. Heterotetramer of two alpha and two beta chains.

Its subcellular location is the cytoplasm. The enzyme catalyses N(2)-acetyl-L-ornithine + L-glutamate = N-acetyl-L-glutamate + L-ornithine. The catalysed reaction is L-glutamate + acetyl-CoA = N-acetyl-L-glutamate + CoA + H(+). It functions in the pathway amino-acid biosynthesis; L-arginine biosynthesis; L-ornithine and N-acetyl-L-glutamate from L-glutamate and N(2)-acetyl-L-ornithine (cyclic): step 1/1. Its pathway is amino-acid biosynthesis; L-arginine biosynthesis; N(2)-acetyl-L-ornithine from L-glutamate: step 1/4. Functionally, catalyzes two activities which are involved in the cyclic version of arginine biosynthesis: the synthesis of N-acetylglutamate from glutamate and acetyl-CoA as the acetyl donor, and of ornithine by transacetylation between N(2)-acetylornithine and glutamate. In Bacillus cereus (strain ATCC 14579 / DSM 31 / CCUG 7414 / JCM 2152 / NBRC 15305 / NCIMB 9373 / NCTC 2599 / NRRL B-3711), this protein is Arginine biosynthesis bifunctional protein ArgJ.